A 61-amino-acid chain; its full sequence is Large ribosomal subunit protein bL32 (61 aa).

Basic residues predominate over residues 1-16 (MAVPKKKTSKSRKNMR). Positions 1–20 (MAVPKKKTSKSRKNMRRAHD) are disordered.

The protein belongs to the bacterial ribosomal protein bL32 family.

In Pelobacter propionicus (strain DSM 2379 / NBRC 103807 / OttBd1), this protein is Large ribosomal subunit protein bL32.